A 206-amino-acid chain; its full sequence is UPF0301 protein Msil_1255 (206 aa).

Belongs to the UPF0301 (AlgH) family.

The sequence is that of UPF0301 protein Msil_1255 from Methylocella silvestris (strain DSM 15510 / CIP 108128 / LMG 27833 / NCIMB 13906 / BL2).